The chain runs to 288 residues: Rhythmically expressed gene 5 protein (288 aa).

As to expression, expressed in head, but not in the body. Expression levels oscillate with the circadian rhythm.

Its function is as follows. Involved in the generation of biological rhythms (Potential). In the head, oscillates in abundance with a daily peak during early night, even under constant darkness. Oscillation is dependent on period (per) function. In Drosophila melanogaster (Fruit fly), this protein is Rhythmically expressed gene 5 protein (Reg-5).